The following is a 736-amino-acid chain: Centrosomal protein kizuna (736 aa).

A coiled-coil region spans residues 10–35 (HRAMKLQRNLRHCEGKRLELERELFQ). A compositionally biased stretch (polar residues) spans 192–208 (NTSFQLSQKMPVTSVAS). Disordered stretches follow at residues 192-238 (NTSF…SAQL), 279-305 (SFTH…DKHS), 323-348 (EDKQ…SYPP), and 642-690 (TVEE…NMST). Residues 210–219 (EDGRTHRAQI) are compositionally biased toward basic and acidic residues. Residues 328–339 (LDSSSDLTVSIS) show a composition bias toward polar residues. The segment covering 658 to 668 (SETSFSSSEKS) has biased composition (low complexity). Residues 678–690 (IQPNYMKSNNMST) are compositionally biased toward polar residues.

This sequence belongs to the kizuna family.

It localises to the cytoplasm. Its subcellular location is the cytoskeleton. The protein localises to the microtubule organizing center. It is found in the centrosome. The protein resides in the cilium basal body. Centrosomal protein required for establishing a robust mitotic centrosome architecture that can endure the forces that converge on the centrosomes during spindle formation. Required for stabilizing the expanded pericentriolar material around the centriole. The chain is Centrosomal protein kizuna (kiz) from Xenopus laevis (African clawed frog).